A 209-amino-acid chain; its full sequence is Thymidylate kinase (209 aa).

Residue 11–18 (GPDGAGKT) coordinates ATP.

The protein belongs to the thymidylate kinase family.

The catalysed reaction is dTMP + ATP = dTDP + ADP. Functionally, phosphorylation of dTMP to form dTDP in both de novo and salvage pathways of dTTP synthesis. This Streptococcus thermophilus (strain ATCC BAA-250 / LMG 18311) protein is Thymidylate kinase.